We begin with the raw amino-acid sequence, 422 residues long: Serine--tRNA ligase (422 aa).

231-233 (TAE) is a binding site for L-serine. ATP is bound at residue 261–263 (RSE). E284 contributes to the L-serine binding site. Residue 348-351 (EISS) participates in ATP binding. S383 is an L-serine binding site.

It belongs to the class-II aminoacyl-tRNA synthetase family. Type-1 seryl-tRNA synthetase subfamily. As to quaternary structure, homodimer. The tRNA molecule binds across the dimer.

The protein localises to the cytoplasm. The enzyme catalyses tRNA(Ser) + L-serine + ATP = L-seryl-tRNA(Ser) + AMP + diphosphate + H(+). It carries out the reaction tRNA(Sec) + L-serine + ATP = L-seryl-tRNA(Sec) + AMP + diphosphate + H(+). It functions in the pathway aminoacyl-tRNA biosynthesis; selenocysteinyl-tRNA(Sec) biosynthesis; L-seryl-tRNA(Sec) from L-serine and tRNA(Sec): step 1/1. Catalyzes the attachment of serine to tRNA(Ser). Is also able to aminoacylate tRNA(Sec) with serine, to form the misacylated tRNA L-seryl-tRNA(Sec), which will be further converted into selenocysteinyl-tRNA(Sec). The protein is Serine--tRNA ligase of Mycoplasmopsis agalactiae (strain NCTC 10123 / CIP 59.7 / PG2) (Mycoplasma agalactiae).